The primary structure comprises 177 residues: Acireductone dioxygenase (177 aa).

Fe(2+) is bound by residues H97, H99, E103, and H141. H97, H99, E103, and H141 together coordinate Ni(2+).

Belongs to the acireductone dioxygenase (ARD) family. As to quaternary structure, monomer. Fe(2+) is required as a cofactor. The cofactor is Ni(2+).

The enzyme catalyses 1,2-dihydroxy-5-(methylsulfanyl)pent-1-en-3-one + O2 = 3-(methylsulfanyl)propanoate + CO + formate + 2 H(+). The catalysed reaction is 1,2-dihydroxy-5-(methylsulfanyl)pent-1-en-3-one + O2 = 4-methylsulfanyl-2-oxobutanoate + formate + 2 H(+). The protein operates within amino-acid biosynthesis; L-methionine biosynthesis via salvage pathway; L-methionine from S-methyl-5-thio-alpha-D-ribose 1-phosphate: step 5/6. Functionally, catalyzes 2 different reactions between oxygen and the acireductone 1,2-dihydroxy-3-keto-5-methylthiopentene (DHK-MTPene) depending upon the metal bound in the active site. Fe-containing acireductone dioxygenase (Fe-ARD) produces formate and 2-keto-4-methylthiobutyrate (KMTB), the alpha-ketoacid precursor of methionine in the methionine recycle pathway. Ni-containing acireductone dioxygenase (Ni-ARD) produces methylthiopropionate, carbon monoxide and formate, and does not lie on the methionine recycle pathway. In Leptospira biflexa serovar Patoc (strain Patoc 1 / ATCC 23582 / Paris), this protein is Acireductone dioxygenase.